The chain runs to 138 residues: Regulator of ribonuclease activity B (138 aa).

A disordered region spans residues 114–138 (YFEDPNGEDGDDEDFVDEDDDGVRH). The segment covering 118 to 138 (PNGEDGDDEDFVDEDDDGVRH) has biased composition (acidic residues).

This sequence belongs to the RraB family. As to quaternary structure, interacts with the C-terminal region of Rne.

The protein localises to the cytoplasm. Globally modulates RNA abundance by binding to RNase E (Rne) and regulating its endonucleolytic activity. Can modulate Rne action in a substrate-dependent manner by altering the composition of the degradosome. This Escherichia coli (strain K12) protein is Regulator of ribonuclease activity B.